A 211-amino-acid chain; its full sequence is Probable nicotinate-nucleotide adenylyltransferase (211 aa).

This sequence belongs to the NadD family.

The enzyme catalyses nicotinate beta-D-ribonucleotide + ATP + H(+) = deamido-NAD(+) + diphosphate. Its pathway is cofactor biosynthesis; NAD(+) biosynthesis; deamido-NAD(+) from nicotinate D-ribonucleotide: step 1/1. Its function is as follows. Catalyzes the reversible adenylation of nicotinate mononucleotide (NaMN) to nicotinic acid adenine dinucleotide (NaAD). This Gemmatimonas aurantiaca (strain DSM 14586 / JCM 11422 / NBRC 100505 / T-27) protein is Probable nicotinate-nucleotide adenylyltransferase.